The sequence spans 226 residues: Ribosomal RNA large subunit methyltransferase E (226 aa).

The interval 1 to 25 is disordered; sequence MVKPPAGGNEGGRGKPARLKTAYGR. S-adenosyl-L-methionine-binding residues include Gly82, Trp84, Asp100, Asp116, and Asp140. Residue Lys180 is the Proton acceptor of the active site.

The protein belongs to the class I-like SAM-binding methyltransferase superfamily. RNA methyltransferase RlmE family.

Its subcellular location is the cytoplasm. It catalyses the reaction uridine(2552) in 23S rRNA + S-adenosyl-L-methionine = 2'-O-methyluridine(2552) in 23S rRNA + S-adenosyl-L-homocysteine + H(+). Specifically methylates the uridine in position 2552 of 23S rRNA at the 2'-O position of the ribose in the fully assembled 50S ribosomal subunit. The sequence is that of Ribosomal RNA large subunit methyltransferase E from Caulobacter vibrioides (strain ATCC 19089 / CIP 103742 / CB 15) (Caulobacter crescentus).